Consider the following 107-residue polypeptide: Small ribosomal subunit protein bS16 (107 aa).

The disordered stretch occupies residues 85–107 (REARNNPEKAVPRKERKAAEAGK).

The protein belongs to the bacterial ribosomal protein bS16 family.

The protein is Small ribosomal subunit protein bS16 of Rhodopseudomonas palustris (strain BisB5).